The primary structure comprises 726 residues: Dipeptidyl-peptidase 5 (726 aa).

The signal sequence occupies residues 1 to 19 (MAAAKWLIASLAFASSGLA). N-linked (GlcNAc...) asparagine glycans are attached at residues N96 and N252. The segment at 269-291 (AEPINKRNGPRTPQGIEGASSSP) is disordered. S558 serves as the catalytic Charge relay system. A glycan (N-linked (GlcNAc...) asparagine) is linked at N605. Active-site charge relay system residues include D641 and H673. N699 carries an N-linked (GlcNAc...) asparagine glycan.

The protein belongs to the peptidase S9C family.

It is found in the secreted. Functionally, extracellular dipeptidyl-peptidase which removes N-terminal dipeptides sequentially from polypeptides having unsubstituted N-termini. Contributes to pathogenicity. This Trichophyton tonsurans (Scalp ringworm fungus) protein is Dipeptidyl-peptidase 5 (DPP5).